Consider the following 513-residue polypeptide: tRNA A64-2'-O-ribosylphosphate transferase (513 aa).

Functionally, tRNA backbone modifying enzyme that mediates initiator/ elongator tRNA discrimination. This enzyme modifies exclusively the initiator tRNA in position 64 using 5'-phosphoribosyl-1'-pyrophosphate as the modification donor. Recognize the stem-loop IV region that is unique in eukaryotic cytoplasmic initiator tRNAs. This Saccharomyces cerevisiae (strain ATCC 204508 / S288c) (Baker's yeast) protein is tRNA A64-2'-O-ribosylphosphate transferase (RIT1).